The following is a 598-amino-acid chain: Elongation factor 4 (598 aa).

Positions 2–184 (KNIRNFSIIA…EIVRCIPPPV (183 aa)) constitute a tr-type G domain. Residues 14–19 (DHGKST) and 131–134 (NKID) contribute to the GTP site.

It belongs to the TRAFAC class translation factor GTPase superfamily. Classic translation factor GTPase family. LepA subfamily.

It is found in the cell inner membrane. It catalyses the reaction GTP + H2O = GDP + phosphate + H(+). Its function is as follows. Required for accurate and efficient protein synthesis under certain stress conditions. May act as a fidelity factor of the translation reaction, by catalyzing a one-codon backward translocation of tRNAs on improperly translocated ribosomes. Back-translocation proceeds from a post-translocation (POST) complex to a pre-translocation (PRE) complex, thus giving elongation factor G a second chance to translocate the tRNAs correctly. Binds to ribosomes in a GTP-dependent manner. The sequence is that of Elongation factor 4 from Psychromonas ingrahamii (strain DSM 17664 / CCUG 51855 / 37).